A 77-amino-acid polypeptide reads, in one-letter code: Beta-defensin 135 (77 aa).

Positions M1–S24 are cleaved as a signal peptide. 3 cysteine pairs are disulfide-bonded: C37–C64, C44–C58, and C48–C65.

This sequence belongs to the beta-defensin family.

Its subcellular location is the secreted. Its function is as follows. Has antibacterial activity. The chain is Beta-defensin 135 (DEFB135) from Homo sapiens (Human).